Here is a 490-residue protein sequence, read N- to C-terminus: MRSNPTTSGSEVSAVEKKNLGRIVKIIGPVLDVAFPPGKMPNIYNALVVQGRDNEQTNVTCEVQQLLGNNRVRAVAMSDTNGLMRGMEVINTGAPISVPVGGSTLGRIFNVLGQPVDNLGPVDTNTTSPIHRSAPAFIQLDTKLSIFETGIKVVDLLAPYRRGGKIGLFGGAGVGKTVLIMELINNIAKAHGGVSVFGGVGERTREGNDLYMEMKESGVINEENIAESKVALVYGQMNEPPGARMRVGLTALTMAEYFRDVNEQDVLLFIDNIFRFVQAGSEVSALLGRMPSAVGYQPTLSTEMGTLQERITSTKEGSITSIQAVYVPADDLTDPAPATTFAHLDATTVLSRGLAAKGIYPAVDPLDSTSTMLQPRIVGEEHYETAQRVKQTLQRYKELQDIIAILGLDELSEEDRLTVARARKIERFLSQPFFVAEVFTGSPGKYVGLAETIRGFQLILSGELDGLPEQAFYLVGNIDEATAKAMNLKT.

Residue 170–177 (GGAGVGKT) participates in ATP binding.

The protein belongs to the ATPase alpha/beta chains family. In terms of assembly, F-type ATPases have 2 components, CF(1) - the catalytic core - and CF(0) - the membrane proton channel. CF(1) has five subunits: alpha(3), beta(3), gamma(1), delta(1), epsilon(1). CF(0) has four main subunits: a(1), b(1), b'(1) and c(9-12).

Its subcellular location is the plastid. The protein localises to the chloroplast thylakoid membrane. It carries out the reaction ATP + H2O + 4 H(+)(in) = ADP + phosphate + 5 H(+)(out). In terms of biological role, produces ATP from ADP in the presence of a proton gradient across the membrane. The catalytic sites are hosted primarily by the beta subunits. The sequence is that of ATP synthase subunit beta, chloroplastic from Calystegia sepium (Hedge bindweed).